Reading from the N-terminus, the 648-residue chain is MGSSKPLKGFVICCTSIDLKQRTEISTKATKLGAAYRSDFTKDVTHLIAGDFDTPKYKFAAKSRPDIKIMSSEWIPVLYESWVQGEDLDDGLLVDKHFLPTLFKCRVCLTNIGQPERSRIENYVLKHGGTFCPDLTRDVTHLIAGTSSGRKYEYALKWKINVVCVEWLWQSIQRNAVLEPQYFQLDMPAEKIGLGAYVRLDPNTTEAKSYSENQKISKNKEKSGQSLAALAEEADLEPVIMKRGKKRDRSILWEELNNGKFEFSSRSEENSVLLDDFTPETVQPLEENELDTELNIENEAKLFKNLTFYLYEFPNTKVSRLHKCLSDNGGQISEFLSSTIDFVVIPHYFPVDELPIFSFPTVNEWWIERCLYYKKIFGIDEHALAKPFFRPSLVPYFNGLSIHLTGFKGEELSHLKKALTILGAVVHEFLGVQRSILLVNTNEPFSMKTRFKIQHATEWNVRVVGVAWLWNIIQSGKFIDQVSPWAIDKKENQEIKKFTNQNNMVFPTSDRDTRLQNSLAQQPIGHSTPHNSPSLLSVKKRQNNHIRSNTLIQLNSNSKDSTIFPRRSVTVPGDKIDTVWKSSVTKPETPTSPQEHVSYIDPDAQREKHKLYAQLTSNVDAIPPANDLQNQENGLLLITESHRKLRRR.

2 BRCT domains span residues 2 to 92 and 96 to 185; these read GSSK…DDGL and KHFL…YFQL. A Nuclear localization signal motif is present at residues 242-249; sequence KRGKKRDR. 2 BRCT domains span residues 298–384 and 392–486; these read NEAK…EHAL and SLVP…SPWA. Residue Ser592 is modified to Phosphoserine. Residues 643–648 carry the Nuclear localization signal motif; that stretch reads RKLRRR.

As to quaternary structure, interacts with drc1/sld2. Interacts (via BRCT1,2 domains) with crb2; a single rad4 molecule interacts simultaneously with both 'Thr-187' phosphorylation sites in a crb2 dimer.

The protein localises to the nucleus. In terms of biological role, essential component for DNA replication and also the checkpoint control system which couples S and M phases. May directly or indirectly interact with chromatin proteins to form the complex required for the initiation and/or progression of DNA synthesis. Interacts simultaneously with both 'Thr-187' phosphorylation sites in a crb2 dimer for establishing the DNA checkpoint. This Schizosaccharomyces pombe (strain 972 / ATCC 24843) (Fission yeast) protein is S-M checkpoint control protein rad4 (rad4).